The chain runs to 530 residues: Probable ATP-binding protein YbiT (530 aa).

ABC transporter domains are found at residues 2–252 and 320–526; these read LVSS…ERLL and LEVE…YLRS. Residues 34–41 and 352–359 each bind ATP; these read GANGSGKS and GTNGVGKS.

It belongs to the ABC transporter superfamily. ABCF family. YbiT subfamily.

This Escherichia coli O157:H7 protein is Probable ATP-binding protein YbiT (ybiT).